The following is a 105-amino-acid chain: Nitrogen fixation nifHD1 region GlnB-like protein 1 (105 aa).

It belongs to the P(II) protein family.

Functionally, could be involved in the regulation of nitrogen fixation. The polypeptide is Nitrogen fixation nifHD1 region GlnB-like protein 1 (glnBA) (Methanosarcina barkeri).